The chain runs to 635 residues: Cell pattern formation-associated protein stuA (635 aa).

Disordered regions lie at residues 1–21 and 63–82; these read MNQTQPYMDVHSSHLSSAQPY and SGVASSQTAPPPPSTSMSSQ. Positions 129–235 constitute an HTH APSES-type domain; the sequence is RVTATLWEDE…HNIGGLLYHP (107 aa). The H-T-H motif DNA-binding region spans 163–184; that stretch reads GTKLLNVAGMTRGRRDGILKSE. Disordered stretches follow at residues 246-480 and 498-635; these read QESQ…ASRS and SQLT…PRRR. 2 stretches are compositionally biased toward low complexity: residues 276–294 and 312–325; these read MQTSIPSQMPQPPTMSSQP and SASSLMGLSNQSSS. The span at 326-355 shows a compositional bias: polar residues; sequence YDWNNQGMNSGVPNTQPLSIDTTLSNTRSM. Residues 356–380 show a composition bias toward low complexity; the sequence is PTTPATTPPGNNLQGMQSYQSQSGY. Over residues 460–469 the composition is skewed to basic and acidic residues; that stretch reads APEHESEYVQ. Polar residues-rich tracts occupy residues 498–513 and 539–571; these read SQLTNDITGSPQQNGS and AASSLYNIVSDTRGSSNGAGSENYTVASNTAPT. The interval 582 to 605 is nuclear localization domain; sequence KRGREDDDMGRPDSQGDYESKRRR. Over residues 583 to 592 the composition is skewed to basic and acidic residues; the sequence is RGREDDDMGR.

It belongs to the EFG1/PHD1/stuA family.

In terms of biological role, transcription factor that regulates asexual reproduction. Binds the StuA-response elements (StRE) with the consensus sequence 5'-(A/T)CGCG(T/A)N(A/C)-3' at the promoters of target genes. Controls the expression of 6 secondary metabolite biosynthetic clusters including 2 involved in the synthesis of alkaloids (fumigaclavine and fumitremorgen), 2 clusters of the ETP class (gliotoxin and an unknown ETP-like toxin), a cluster predicted to produce pseurotin A, and the product of the last cluster is unknown. Controls the production of ergot alkaloids during conidiophore development. Controls expression of sspA and gliP. Involved in the induction of immunoglobulin E-independent mast cell degranulation. This Aspergillus fumigatus (strain ATCC MYA-4609 / CBS 101355 / FGSC A1100 / Af293) (Neosartorya fumigata) protein is Cell pattern formation-associated protein stuA.